Here is a 417-residue protein sequence, read N- to C-terminus: Serine hydroxymethyltransferase (417 aa).

(6S)-5,6,7,8-tetrahydrofolate contacts are provided by residues Leu-121 and 125-127; that span reads GHL. Lys-229 bears the N6-(pyridoxal phosphate)lysine mark. (6S)-5,6,7,8-tetrahydrofolate is bound at residue 355–357; the sequence is SPF.

Belongs to the SHMT family. As to quaternary structure, homodimer. Pyridoxal 5'-phosphate is required as a cofactor.

Its subcellular location is the cytoplasm. The enzyme catalyses (6R)-5,10-methylene-5,6,7,8-tetrahydrofolate + glycine + H2O = (6S)-5,6,7,8-tetrahydrofolate + L-serine. The protein operates within one-carbon metabolism; tetrahydrofolate interconversion. It participates in amino-acid biosynthesis; glycine biosynthesis; glycine from L-serine: step 1/1. Catalyzes the reversible interconversion of serine and glycine with tetrahydrofolate (THF) serving as the one-carbon carrier. This reaction serves as the major source of one-carbon groups required for the biosynthesis of purines, thymidylate, methionine, and other important biomolecules. Also exhibits THF-independent aldolase activity toward beta-hydroxyamino acids, producing glycine and aldehydes, via a retro-aldol mechanism. This is Serine hydroxymethyltransferase from Sodalis glossinidius (strain morsitans).